Here is a 422-residue protein sequence, read N- to C-terminus: Receptor homology region, transmembrane domain- and RING domain-containing protein 3 (422 aa).

A signal peptide spans 1-22 (MNLVVLLILTLLLFIVSYVVDA). The Lumenal portion of the chain corresponds to 23 to 168 (GQVILVDSNI…NTEDSVWSLY (146 aa)). An N-linked (GlcNAc...) asparagine glycan is attached at Asn-31. Cys-64 and Cys-89 are joined by a disulfide. Residues 81–146 (LVLIIRGGCS…RAGEMLKKYA (66 aa)) enclose the PA domain. Residues 169 to 189 (ASIALILSLAIFCVMVTCVFF) traverse the membrane as a helical segment. At 190-422 (YRYCSTIRNS…HFASAHSLPD (233 aa)) the chain is on the cytoplasmic side. The RING-type; atypical zinc finger occupies 232–274 (CAICLEDYIVGDKLRVLPCSHKFHVACVDSWLISWRTFCPVCK). The tract at residues 344-368 (LRRQASPLQSSSQRSHLSMKSSHSL) is disordered. The span at 349–368 (SPLQSSSQRSHLSMKSSHSL) shows a compositional bias: polar residues.

The protein localises to the prevacuolar compartment membrane. The protein resides in the protein storage vacuole membrane. Involved in the trafficking of vacuolar proteins. May function as a sorting receptor for protein trafficking to the protein storage vacuole (PSV). This chain is Receptor homology region, transmembrane domain- and RING domain-containing protein 3 (RMR3), found in Arabidopsis thaliana (Mouse-ear cress).